The following is a 74-amino-acid chain: UPF0346 protein BPUM_1890 (74 aa).

Belongs to the UPF0346 family.

This chain is UPF0346 protein BPUM_1890, found in Bacillus pumilus (strain SAFR-032).